Here is a 204-residue protein sequence, read N- to C-terminus: MELLDVDGAWLYTPEIMRDERGEFLEWFRGRTFQEKIGHPLSLAQANCSVSRKAFCAASTSPTPPPGQAKYVTCASGTVLDVVVDVRRGSPTFGRWAAVRLDAARHQGLYLAEGLGHAFMALTDDATVVYLCSQPYVAEAERAVDPLDPAIGIEWPTDIDIVPVGEGTPTHRPWRRPRRPGILPDYEGVPGALHRGGGRRGTGP.

Substrate contacts are provided by residues Arg-21, Glu-26, Gln-45–Asn-47, Lys-70, and His-117. Residue Tyr-130 is the Proton donor of the active site. Residue Glu-141 coordinates substrate. The tract at residues Val-164–Pro-204 is disordered.

Belongs to the dTDP-4-dehydrorhamnose 3,5-epimerase family.

Its pathway is antibiotic biosynthesis. Its function is as follows. Involved in the biosynthesis of one of the two 2,6-deoxysugars, dTDP-L-oleandrose, attached to the macrolactone ring oleandolide to produce the aglycone antibiotic oleandomycin. Probably catalyzes the conversion of dTDP-4-keto-2,6-dideoxy-alpha-D-glucose to dTDP-4-keto-2,6-dideoxy-beta-L-galactose. This Streptomyces antibioticus protein is Probable dTDP-4-oxo-2,6-dideoxy-D-glucose 3,5-epimerase.